The sequence spans 151 residues: 3-dehydroquinate dehydratase (151 aa).

The active-site Proton acceptor is the Y24. 3 residues coordinate substrate: N76, H82, and D89. The active-site Proton donor is the H102. Substrate is bound by residues 103–104 (VS) and R113.

It belongs to the type-II 3-dehydroquinase family. In terms of assembly, homododecamer.

It catalyses the reaction 3-dehydroquinate = 3-dehydroshikimate + H2O. It functions in the pathway metabolic intermediate biosynthesis; chorismate biosynthesis; chorismate from D-erythrose 4-phosphate and phosphoenolpyruvate: step 3/7. Catalyzes a trans-dehydration via an enolate intermediate. The polypeptide is 3-dehydroquinate dehydratase (Rhodopseudomonas palustris (strain TIE-1)).